The sequence spans 165 residues: Thiol peroxidase (165 aa).

The Thioredoxin domain maps to 18-165 (PQVGDVVTDF…PNYDAALAVL (148 aa)). Cys-60 serves as the catalytic Cysteine sulfenic acid (-SOH) intermediate. A disulfide bridge links Cys-60 with Cys-94.

It belongs to the peroxiredoxin family. Tpx subfamily. In terms of assembly, homodimer.

It carries out the reaction a hydroperoxide + [thioredoxin]-dithiol = an alcohol + [thioredoxin]-disulfide + H2O. Its function is as follows. Thiol-specific peroxidase that catalyzes the reduction of hydrogen peroxide and organic hydroperoxides to water and alcohols, respectively. Plays a role in cell protection against oxidative stress by detoxifying peroxides. In Pasteurella multocida (strain Pm70), this protein is Thiol peroxidase.